The sequence spans 876 residues: Inter-alpha-trypsin inhibitor heavy chain H3 (876 aa).

The N-terminal stretch at 1-18 (MVALSHLGSALQLGSLWG) is a signal peptide. Positions 19 to 31 (FPRSPFRLLGKRS) are excised as a propeptide. The 130-residue stretch at 26 to 155 (LLGKRSLPEG…KVTFELTYEE (130 aa)) folds into the VIT domain. N-linked (GlcNAc...) asparagine glycosylation occurs at Asn88. The VWFA domain occupies 281–464 (NVAFVIDISG…LQLQGFYEEV (184 aa)). A glycan (N-linked (GlcNAc...) asparagine) is linked at Asn577. Asp637 is modified (aspartate 1-(chondroitin 4-sulfate)-ester). The propeptide occupies 638 to 876 (PHFIIQVPEK…HTDYIVPNLF (239 aa)).

This sequence belongs to the ITIH family. In terms of assembly, I-alpha-I plasma protease inhibitors are assembled from one or two heavy chains (HC) and one light chain, bikunin. Pre-alpha-inhibitor (P-alpha-I) is composed of ITIH3/HC3 and bikunin. In terms of processing, heavy chains are linked to bikunin via chondroitin 4-sulfate esterified to the alpha-carboxyl of the C-terminal aspartate after propeptide cleavage.

It is found in the secreted. Its function is as follows. May act as a carrier of hyaluronan in serum or as a binding protein between hyaluronan and other matrix protein, including those on cell surfaces in tissues to regulate the localization, synthesis and degradation of hyaluronan which are essential to cells undergoing biological processes. The chain is Inter-alpha-trypsin inhibitor heavy chain H3 (ITIH3) from Pongo abelii (Sumatran orangutan).